Consider the following 503-residue polypeptide: Rhomboid-type serine protease 2 (503 aa).

Positions 1–11 (MAAQSYYNGAY) are enriched in polar residues. Positions 1–66 (MAAQSYYNGA…SLRYSQQSIG (66 aa)) are disordered. The Cytoplasmic portion of the chain corresponds to 1-136 (MAAQSYYNGA…QKKKGFFQKK (136 aa)). A helical transmembrane segment spans residues 137-157 (IAYVTYILTIAQIIVFIVELV). Topologically, residues 158-253 (KMGQLTGSPI…DKPAPDQWFR (96 aa)) are extracellular. The helical transmembrane segment at 254-274 (FIIPMFLHSGFVHIGFNLLVQ) threads the bilayer. Over 275-283 (MTMGADMER) the chain is Cytoplasmic. Residues 284 to 304 (MIGWWRYGLVYLSSGIWGFVL) form a helical membrane-spanning segment. Residues 305 to 316 (GGNYAGQGEASC) are Extracellular-facing. Residues 317–337 (GCSGALFGILALFVLDLLYGW) traverse the membrane as a helical segment. S319 (nucleophile) is an active-site residue. The Cytoplasmic segment spans residues 338 to 342 (NDRQN). The chain crosses the membrane as a helical span at residues 343 to 363 (PWVELIIMVLGIAVSFVLGLL). The Extracellular portion of the chain corresponds to 364–365 (PG). The helical transmembrane segment at 366 to 386 (LDNFSHLGGFTMGLALGLCVM) threads the bilayer. Residue H371 is part of the active site. Topologically, residues 387 to 449 (RSPNALRERI…FAGRKPLWWA (63 aa)) are cytoplasmic. Residues 450–470 (WWLVRLGALVAVLIGFILLIV) traverse the membrane as a helical segment. The Extracellular segment spans residues 471–503 (NFYKYPSSNCSWCYRFSCLPVNGWCDQGNLFSR).

This sequence belongs to the peptidase S54 family.

Its subcellular location is the membrane. The enzyme catalyses Cleaves type-1 transmembrane domains using a catalytic dyad composed of serine and histidine that are contributed by different transmembrane domains.. Functionally, probable rhomboid-type serine protease that catalyzes intramembrane proteolysis. This chain is Rhomboid-type serine protease 2, found in Emericella nidulans (strain FGSC A4 / ATCC 38163 / CBS 112.46 / NRRL 194 / M139) (Aspergillus nidulans).